We begin with the raw amino-acid sequence, 403 residues long: MDTKAFKRSLQQSENYHRKGFGQTEAAMGVMNTEYQSSLIQQIRQNNYQWKQGNVTIHLAQAFGFCWGVERAVAMAYETRQHFPKESIWITNELIHHPSVNQRLEQMEIKFIEVINGQKDFSQIKSGDVVILPAFGASVSEMQLLNDRGCTIVDTTCPWVSKVWNSVEKHKKRHYTSIIHGKYRHEETVATSSFAGTYLVVLNLEQATYVCDYILKGGNKEEFLAKFKNAYSEGFDPDTDLEKVGIANQTTMLKSETEQIGKLFEGTMLKKYGPAVINDHFMSFNTICDATQERQDAMLELVKEKLDLMVVIGGFNSSNTTHLQEIPIYQGITSYHIDNATRIKPNNCIEHKPLGKDLEIKENWLPEGSIVVGITSGASTPDIIVEAVIEKIFSAKELEYQSN.

A [4Fe-4S] cluster-binding site is contributed by C66. Position 96 (H96) interacts with (2E)-4-hydroxy-3-methylbut-2-enyl diphosphate. H96 lines the dimethylallyl diphosphate pocket. H96 lines the isopentenyl diphosphate pocket. Residue C157 coordinates [4Fe-4S] cluster. H185 lines the (2E)-4-hydroxy-3-methylbut-2-enyl diphosphate pocket. Residue H185 coordinates dimethylallyl diphosphate. H185 is an isopentenyl diphosphate binding site. Catalysis depends on E187, which acts as the Proton donor. Residue T250 coordinates (2E)-4-hydroxy-3-methylbut-2-enyl diphosphate. C288 contributes to the [4Fe-4S] cluster binding site. (2E)-4-hydroxy-3-methylbut-2-enyl diphosphate contacts are provided by S317, S318, N319, and S379. Positions 317, 318, 319, and 379 each coordinate dimethylallyl diphosphate. Residues S317, S318, N319, and S379 each coordinate isopentenyl diphosphate.

The protein belongs to the IspH family. It depends on [4Fe-4S] cluster as a cofactor.

It carries out the reaction isopentenyl diphosphate + 2 oxidized [2Fe-2S]-[ferredoxin] + H2O = (2E)-4-hydroxy-3-methylbut-2-enyl diphosphate + 2 reduced [2Fe-2S]-[ferredoxin] + 2 H(+). The catalysed reaction is dimethylallyl diphosphate + 2 oxidized [2Fe-2S]-[ferredoxin] + H2O = (2E)-4-hydroxy-3-methylbut-2-enyl diphosphate + 2 reduced [2Fe-2S]-[ferredoxin] + 2 H(+). It functions in the pathway isoprenoid biosynthesis; dimethylallyl diphosphate biosynthesis; dimethylallyl diphosphate from (2E)-4-hydroxy-3-methylbutenyl diphosphate: step 1/1. The protein operates within isoprenoid biosynthesis; isopentenyl diphosphate biosynthesis via DXP pathway; isopentenyl diphosphate from 1-deoxy-D-xylulose 5-phosphate: step 6/6. Functionally, catalyzes the conversion of 1-hydroxy-2-methyl-2-(E)-butenyl 4-diphosphate (HMBPP) into a mixture of isopentenyl diphosphate (IPP) and dimethylallyl diphosphate (DMAPP). Acts in the terminal step of the DOXP/MEP pathway for isoprenoid precursor biosynthesis. The chain is 4-hydroxy-3-methylbut-2-enyl diphosphate reductase from Rippkaea orientalis (strain PCC 8801 / RF-1) (Cyanothece sp. (strain PCC 8801)).